A 450-amino-acid chain; its full sequence is Sensor histidine kinase EnvZ (450 aa).

The Cytoplasmic segment spans residues 1–15 (MRRLRFSPRSSFART). The helical transmembrane segment at 16–35 (LLLIVTLLFASLVTTYLVVL) threads the bilayer. The Periplasmic portion of the chain corresponds to 36 to 158 (NFAILPSLQQ…LTEIHQGDFS (123 aa)). The polyP-periplasmic motif signature appears at 71-75 (VVPPA). Residues 159-179 (PLFRYTLAIMLLAIGGAWLFI) traverse the membrane as a helical segment. Residues 180–232 (RIQNRPLVDLEHAALQVGKGIIPPPLREYGASEVRSVTRAFNHMAAGVKQLAD) form the HAMP domain. Residues 180 to 450 (RIQNRPLVDL…TRAQGTTKEG (271 aa)) are Cytoplasmic-facing. Residues 201–205 (IPPPL) carry the polyP-cytoplasmic motif motif. The segment at 223–289 (MAAGVKQLAD…IIEQFIDYLR (67 aa)) is cytoplasmic dimerization domain (CDD), when dimerized forms osmosensitive core. The region spanning 240–440 (GVSHDLRTPL…SIRAWLPVPV (201 aa)) is the Histidine kinase domain. Residues His-243, 347 to 351 (NAARY), Asp-373, 392 to 393 (RG), and 402 to 406 (TGLGL) contribute to the ATP site. His-243 is modified (phosphohistidine; by autocatalysis).

Homodimer. Interacts with MzrA. Autophosphorylated. Incubation of isolated EnvZ C-terminal fragment (residues 180-450) with increasing levels of NaCl or sucrose increases its autophosphorylation.

The protein resides in the cell inner membrane. The catalysed reaction is ATP + protein L-histidine = ADP + protein N-phospho-L-histidine.. With respect to regulation, activity is modulated by MzrA. In the presence of 0.2 M NaCl, 2.0 mM sodium cholate (bile salts) decreases expression from the ompC promoter; how this is mediated is unknown. Autophosphorylation is inhibited by the angucycline antibiotic waldiomycin in a non-competitive manner; waldiomycin prevents dimerization of the cytoplasmic domain and autophosphorylation. In terms of biological role, member of the two-component regulatory system EnvZ/OmpR involved in osmoregulation (particularly of genes ompF and ompC) as well as other genes. EnvZ functions as a membrane-associated protein kinase that phosphorylates OmpR in response to environmental signals; at low osmolarity OmpR activates ompF transcription, while at high osmolarity it represses ompF and activates ompC transcription. Also dephosphorylates OmpR in the presence of ATP. The cytoplasmic dimerization domain (CDD) forms an osmosensitive core; increasing osmolarity stabilizes this segment (possibly by its contraction), enhancing the autophosphorylation rate and consequently, downstream phosphotransfer to OmpR and signaling. Autophosphorylation is greater when full-length EnvZ is reconstituted in a lipid environment, lipid-mediated allostery impacts the kinase function of EnvZ. Involved in acid stress response; this requires EnvZ but not OmpR phosphorylation, and suggests that EnvZ senses cytoplasmic acidic pH. The polypeptide is Sensor histidine kinase EnvZ (envZ) (Escherichia coli (strain K12)).